A 401-amino-acid polypeptide reads, in one-letter code: Mu-type opioid receptor (401 aa).

Over 1–69 (MDSSADPRNA…CPPTGSPSMV (69 aa)) the chain is Extracellular. N-linked (GlcNAc...) asparagine glycans are attached at residues Asn-9, Asn-12, Asn-34, Asn-41, and Asn-49. Residues 70 to 94 (TAITIMALYSIVCVVGLFGNFLVMY) traverse the membrane as a helical segment. The Cytoplasmic portion of the chain corresponds to 95 to 107 (VIVRYTKMKTATN). The helical transmembrane segment at 108 to 132 (IYIFNLALADALATSTLPFQSVNYL) threads the bilayer. Over 133–143 (MGTWPFGTILC) the chain is Extracellular. Residues Cys-143 and Cys-220 are joined by a disulfide bond. Residues 144–166 (KIVISIDYYNMFTSIFTLCTMSV) traverse the membrane as a helical segment. The Cytoplasmic portion of the chain corresponds to 167-186 (DRYIAVCHPVKALDFRTPRN). At Tyr-169 the chain carries Phosphotyrosine. Residues 187 to 208 (AKIINVCNWILSSAIGLPVMFM) form a helical membrane-spanning segment. Topologically, residues 209-231 (ATTKYRNGSIDCALTFSHPTWYW) are extracellular. A helical membrane pass occupies residues 232–256 (ENLLKICVFIFAFIMPVLIITVCYG). The Cytoplasmic portion of the chain corresponds to 257–280 (LMILRLKSVRMLSGSKEKDRNLRR). Residues 281-307 (ITRMVLVVVAVFIVCWTPIHIYVIIKA) traverse the membrane as a helical segment. Topologically, residues 308–315 (LITIPETT) are extracellular. A helical membrane pass occupies residues 316–339 (FQTVSWHFCIALGYTNSCLNPVLY). The short motif at 335 to 339 (NPVLY) is the NPxxY; plays a role in stabilizing the activated conformation of the receptor element. Residues 340-401 (AFLDENFKRC…NLEAETAPLP (62 aa)) lie on the Cytoplasmic side of the membrane. The S-palmitoyl cysteine moiety is linked to residue Cys-354. Residues 365 to 385 (NSARIRQNTRDHPSTANTVDR) form a disordered region. Position 366 is a phosphoserine (Ser-366). Thr-373 carries the phosphothreonine modification. Residue Ser-378 is modified to Phosphoserine. Residue Thr-397 is modified to Phosphothreonine.

It belongs to the G-protein coupled receptor 1 family. In terms of assembly, forms homooligomers and heterooligomers with other GPCRs, such as OPRD1, OPRK1, OPRL1, NPFFR2, ADRA2A, SSTR2, CNR1 and CCR5 (probably in dimeric forms). Interacts with heterotrimeric G proteins; interaction with a heterotrimeric complex containing GNAI1, GNB1 and GNG2 stabilizes the active conformation of the receptor and increases its affinity for endomorphin-2, the synthetic opioid peptide DAMGO and for morphinan agonists. Interacts with PPL; the interaction disrupts agonist-mediated G-protein activation. Interacts (via C-terminus) with DNAJB4 (via C-terminus). Interacts with calmodulin; the interaction inhibits the constitutive activity of OPRM1; it abolishes basal and attenuates agonist-stimulated G-protein coupling. Interacts with FLNA, PLD2, RANBP9 and WLS and GPM6A. Interacts with RTP4. Interacts with SYP and GNAS. Interacts with RGS9, RGS17, RGS20, RGS4, PPP1R9B and HINT1. Post-translationally, phosphorylated. Differentially phosphorylated in basal and agonist-induced conditions. Agonist-mediated phosphorylation modulates receptor internalization. Phosphorylated by GRK2 in a agonist-dependent manner. Phosphorylation at Tyr-169 requires receptor activation, is dependent on non-receptor protein tyrosine kinase Src and results in a decrease in agonist efficacy by reducing G-protein coupling efficiency. Phosphorylated on tyrosine residues; the phosphorylation is involved in agonist-induced G-protein-independent receptor down-regulation. Phosphorylation at Ser-378 is involved in G-protein-dependent but not beta-arrestin-dependent activation of the ERK pathway. In terms of processing, ubiquitinated. A basal ubiquitination seems not to be related to degradation. Ubiquitination is increased upon formation of OPRM1:OPRD1 oligomers leading to proteasomal degradation; the ubiquitination is diminished by RTP4.

The protein localises to the cell membrane. It is found in the cell projection. Its subcellular location is the axon. The protein resides in the perikaryon. It localises to the dendrite. The protein localises to the endosome. Receptor for endogenous opioids such as beta-endorphin and endomorphin. Receptor for natural and synthetic opioids including morphine, heroin, DAMGO, fentanyl, etorphine, buprenorphin and methadone. Also activated by enkephalin peptides, such as Met-enkephalin or Met-enkephalin-Arg-Phe, with higher affinity for Met-enkephalin-Arg-Phe. Agonist binding to the receptor induces coupling to an inactive GDP-bound heterotrimeric G-protein complex and subsequent exchange of GDP for GTP in the G-protein alpha subunit leading to dissociation of the G-protein complex with the free GTP-bound G-protein alpha and the G-protein beta-gamma dimer activating downstream cellular effectors. The agonist- and cell type-specific activity is predominantly coupled to pertussis toxin-sensitive G(i) and G(o) G alpha proteins, GNAI1, GNAI2, GNAI3 and GNAO1, and to a lesser extent to pertussis toxin-insensitive G alpha proteins GNAZ and GNA15. They mediate an array of downstream cellular responses, including inhibition of adenylate cyclase activity and both N-type and L-type calcium channels, activation of inward rectifying potassium channels, mitogen-activated protein kinase (MAPK), phospholipase C (PLC), phosphoinositide/protein kinase (PKC), phosphoinositide 3-kinase (PI3K) and regulation of NF-kappa-B. Also couples to adenylate cyclase stimulatory G alpha proteins. The selective temporal coupling to G-proteins and subsequent signaling can be regulated by RGSZ proteins, such as RGS9, RGS17 and RGS4. Phosphorylation by members of the GPRK subfamily of Ser/Thr protein kinases and association with beta-arrestins is involved in short-term receptor desensitization. Beta-arrestins associate with the GPRK-phosphorylated receptor and uncouple it from the G-protein thus terminating signal transduction. The phosphorylated receptor is internalized through endocytosis via clathrin-coated pits which involves beta-arrestins. The activation of the ERK pathway occurs either in a G-protein-dependent or a beta-arrestin-dependent manner and is regulated by agonist-specific receptor phosphorylation. Acts as a class A G-protein coupled receptor (GPCR) which dissociates from beta-arrestin at or near the plasma membrane and undergoes rapid recycling. Receptor down-regulation pathways are varying with the agonist and occur dependent or independent of G-protein coupling. Endogenous ligands induce rapid desensitization, endocytosis and recycling. Heterooligomerization with other GPCRs can modulate agonist binding, signaling and trafficking properties. Involved in neurogenesis. This Sus scrofa (Pig) protein is Mu-type opioid receptor (OPRM1).